The sequence spans 1159 residues: Ferroxidase HEPHL1 (1159 aa).

The first 23 residues, 1–23 (MFLKQPGGCILLQFLGLLGLVGA), serve as a signal peptide directing secretion. Plastocyanin-like domains are found at residues 24–206 (VTRT…LLVC), 217–365 (MRTD…VGNC), 378–560 (QRRY…LLVC), 570–718 (TQKG…ISSC), 730–906 (MLRT…LITC), and 914–1092 (KGRR…VPSQ). Topologically, residues 24-1114 (VTRTYYIGIV…KNLRPRGAKA (1091 aa)) are extracellular. Cu cation-binding residues include H126 and H128. Residue N160 is glycosylated (N-linked (GlcNAc...) asparagine). A disulfide bridge connects residues C180 and C206. Residues H186 and H188 each coordinate Cu cation. N235 carries N-linked (GlcNAc...) asparagine glycosylation. A disulfide bond links C284 and C365. Residues H303, C346, and H351 each contribute to the Cu cation site. N-linked (GlcNAc...) asparagine glycosylation occurs at N406. C534 and C560 are oxidised to a cystine. The N-linked (GlcNAc...) asparagine glycan is linked to N588. A disulfide bridge links C637 with C718. Positions 656, 699, 704, and 709 each coordinate Cu cation. N-linked (GlcNAc...) asparagine glycosylation is present at N771. The cysteines at positions 880 and 906 are disulfide-linked. A glycan (N-linked (GlcNAc...) asparagine) is linked at N934. Residues H1002, H1005, H1007, H1047, C1048, H1049, H1053, and M1058 each coordinate Cu cation. A helical membrane pass occupies residues 1115-1135 (ALVILFILGLLLLVATVVLAL). At 1136–1159 (RLRSSRRQMAYREVQSCALPTDAL) the chain is on the cytoplasmic side.

The protein belongs to the multicopper oxidase family. Cu cation serves as cofactor.

The protein resides in the membrane. The enzyme catalyses 4 Fe(2+) + O2 + 4 H(+) = 4 Fe(3+) + 2 H2O. Functionally, is a copper-binding glycoprotein with ferroxidase activity. It oxidizes Fe(2+) to Fe(3+) without releasing radical oxygen species. May be involved in the regulation of intracellular iron content. In Mus musculus (Mouse), this protein is Ferroxidase HEPHL1 (Hephl1).